The following is a 90-amino-acid chain: DNA-binding protein HU (90 aa).

It belongs to the bacterial histone-like protein family. Homodimer.

Its function is as follows. Histone-like DNA-binding protein which is capable of wrapping DNA to stabilize it, and thus to prevent its denaturation under extreme environmental conditions. The sequence is that of DNA-binding protein HU (hup) from Haemophilus influenzae (strain ATCC 51907 / DSM 11121 / KW20 / Rd).